A 307-amino-acid polypeptide reads, in one-letter code: tRNA dimethylallyltransferase (307 aa).

Position 8 to 15 (8 to 15 (GPTGSGKS)) interacts with ATP. Position 10–15 (10–15 (TGSGKS)) interacts with substrate. The interval 33-36 (DSLQ) is interaction with substrate tRNA.

This sequence belongs to the IPP transferase family. As to quaternary structure, monomer. Requires Mg(2+) as cofactor.

The enzyme catalyses adenosine(37) in tRNA + dimethylallyl diphosphate = N(6)-dimethylallyladenosine(37) in tRNA + diphosphate. In terms of biological role, catalyzes the transfer of a dimethylallyl group onto the adenine at position 37 in tRNAs that read codons beginning with uridine, leading to the formation of N6-(dimethylallyl)adenosine (i(6)A). This is tRNA dimethylallyltransferase from Solibacter usitatus (strain Ellin6076).